Reading from the N-terminus, the 204-residue chain is Recombination protein RecR (204 aa).

The C4-type zinc-finger motif lies at 58–75; that stretch reads CSICQNITDLGTDPCLLC. In terms of domain architecture, Toprim spans 83-181; that stretch reads SVICVVESPT…NVTRIARGIP (99 aa).

The protein belongs to the RecR family.

In terms of biological role, may play a role in DNA repair. It seems to be involved in an RecBC-independent recombinational process of DNA repair. It may act with RecF and RecO. This chain is Recombination protein RecR, found in Chlorobaculum parvum (strain DSM 263 / NCIMB 8327) (Chlorobium vibrioforme subsp. thiosulfatophilum).